A 316-amino-acid chain; its full sequence is Coproporphyrin III ferrochelatase (316 aa).

Residues Y13, R30, 46–47, S54, and Y125 contribute to the Fe-coproporphyrin III site; that span reads RY. Fe(2+)-binding residues include H183 and E264.

This sequence belongs to the ferrochelatase family.

It localises to the cytoplasm. It catalyses the reaction Fe-coproporphyrin III + 2 H(+) = coproporphyrin III + Fe(2+). Its pathway is porphyrin-containing compound metabolism; protoheme biosynthesis. Its function is as follows. Involved in coproporphyrin-dependent heme b biosynthesis. Catalyzes the insertion of ferrous iron into coproporphyrin III to form Fe-coproporphyrin III. In Geobacillus kaustophilus (strain HTA426), this protein is Coproporphyrin III ferrochelatase.